Reading from the N-terminus, the 137-residue chain is Small ribosomal subunit protein uS12 (137 aa).

Residues 1–23 (MPTINQLVRKPRKSNATKSKSPA) form a disordered region. Asp102 is subject to 3-methylthioaspartic acid.

The protein belongs to the universal ribosomal protein uS12 family. In terms of assembly, part of the 30S ribosomal subunit. Contacts proteins S8 and S17. May interact with IF1 in the 30S initiation complex.

With S4 and S5 plays an important role in translational accuracy. Functionally, interacts with and stabilizes bases of the 16S rRNA that are involved in tRNA selection in the A site and with the mRNA backbone. Located at the interface of the 30S and 50S subunits, it traverses the body of the 30S subunit contacting proteins on the other side and probably holding the rRNA structure together. The combined cluster of proteins S8, S12 and S17 appears to hold together the shoulder and platform of the 30S subunit. This chain is Small ribosomal subunit protein uS12, found in Leuconostoc citreum (strain KM20).